A 295-amino-acid polypeptide reads, in one-letter code: Xyloglucan endotransglucosylase protein 2 (295 aa).

Positions 1–23 (MAMGTHFGGLWLALLCMVSATMG) are cleaved as a signal peptide. The GH16 domain maps to 24–222 (AVPRKPVDVP…WSKAPFVASY (199 aa)). E108 serves as the catalytic Nucleophile. E112 serves as the catalytic Proton donor. Position 112 (E112) interacts with xyloglucan. N116 carries N-linked (GlcNAc...) asparagine glycosylation. Xyloglucan is bound by residues 125 to 127 (QTN), 135 to 137 (DRE), 201 to 202 (DW), and G206. 2 disulfides stabilise this stretch: C230–C239 and C276–C289. Residue R281 coordinates xyloglucan.

This sequence belongs to the glycosyl hydrolase 16 family. XTH group 1 subfamily. Contains at least one intrachain disulfide bond essential for its enzymatic activity. In terms of tissue distribution, expressed in fruit pulp.

The protein resides in the secreted. Its subcellular location is the cell wall. The protein localises to the extracellular space. It is found in the apoplast. The enzyme catalyses breaks a beta-(1-&gt;4) bond in the backbone of a xyloglucan and transfers the xyloglucanyl segment on to O-4 of the non-reducing terminal glucose residue of an acceptor, which can be a xyloglucan or an oligosaccharide of xyloglucan.. Its function is as follows. Catalyzes xyloglucan endotransglycosylation (XET). Cleaves and religates xyloglucan polymers. Does not catalyze xyloglucan endohydrolysis (XEH). Probably involved in cell wall restructuring during fruit ripening and postharvest fruit softening. This chain is Xyloglucan endotransglucosylase protein 2, found in Diospyros kaki (Kaki persimmon).